The sequence spans 130 residues: MEEKIILSIQNPEDVLISYVDIYLGDKNVSLEVLSKDTAKINLPFDKDEGEGEIVVKIKYKTLPHYKNNNNKKEVKKQDYKNLTQTLNEITKKTTNRKDNDIIIADSKPVSLDGLKKEEKKKKLNDIIIV.

This is an uncharacterized protein from Methanocaldococcus jannaschii (strain ATCC 43067 / DSM 2661 / JAL-1 / JCM 10045 / NBRC 100440) (Methanococcus jannaschii).